We begin with the raw amino-acid sequence, 61 residues long: Small ribosomal subunit protein uS14 (61 aa).

Cysteine 24, cysteine 27, cysteine 40, and cysteine 43 together coordinate Zn(2+).

It belongs to the universal ribosomal protein uS14 family. Zinc-binding uS14 subfamily. As to quaternary structure, part of the 30S ribosomal subunit. Contacts proteins S3 and S10. It depends on Zn(2+) as a cofactor.

Functionally, binds 16S rRNA, required for the assembly of 30S particles and may also be responsible for determining the conformation of the 16S rRNA at the A site. The protein is Small ribosomal subunit protein uS14 of Symbiobacterium thermophilum (strain DSM 24528 / JCM 14929 / IAM 14863 / T).